Reading from the N-terminus, the 249-residue chain is 15,16-dihydrobiliverdin:ferredoxin oxidoreductase (249 aa).

It belongs to the HY2 family.

It carries out the reaction 15,16-dihydrobiliverdin + oxidized 2[4Fe-4S]-[ferredoxin] = biliverdin IXalpha + reduced 2[4Fe-4S]-[ferredoxin] + 2 H(+). In terms of biological role, catalyzes the two-electron reduction of biliverdin IX-alpha at the C15 methine bridge. This is 15,16-dihydrobiliverdin:ferredoxin oxidoreductase from Prochlorococcus marinus (strain MIT 9303).